The following is an 853-amino-acid chain: DNA mismatch repair protein MutS (853 aa).

Residue 614-621 (GPNMGGKS) coordinates ATP.

This sequence belongs to the DNA mismatch repair MutS family.

Functionally, this protein is involved in the repair of mismatches in DNA. It is possible that it carries out the mismatch recognition step. This protein has a weak ATPase activity. The polypeptide is DNA mismatch repair protein MutS (Citrobacter koseri (strain ATCC BAA-895 / CDC 4225-83 / SGSC4696)).